The chain runs to 324 residues: DNA repair and recombination protein RadA (324 aa).

114–121 (GEFGSGKT) contributes to the ATP binding site.

The protein belongs to the eukaryotic RecA-like protein family.

Its function is as follows. Involved in DNA repair and in homologous recombination. Binds and assemble on single-stranded DNA to form a nucleoprotein filament. Hydrolyzes ATP in a ssDNA-dependent manner and promotes DNA strand exchange between homologous DNA molecules. The chain is DNA repair and recombination protein RadA from Metallosphaera sedula (strain ATCC 51363 / DSM 5348 / JCM 9185 / NBRC 15509 / TH2).